Here is a 639-residue protein sequence, read N- to C-terminus: Threonine--tRNA ligase (639 aa).

Residues 1–61 (MIHITLPDGS…TADCRLSIIT (61 aa)) form the TGS domain. The tract at residues 242 to 533 (DHRKLGRELD…LLEQHAGALP (292 aa)) is catalytic. 3 residues coordinate Zn(2+): cysteine 333, histidine 384, and histidine 510.

This sequence belongs to the class-II aminoacyl-tRNA synthetase family. As to quaternary structure, homodimer. It depends on Zn(2+) as a cofactor.

It is found in the cytoplasm. It catalyses the reaction tRNA(Thr) + L-threonine + ATP = L-threonyl-tRNA(Thr) + AMP + diphosphate + H(+). In terms of biological role, catalyzes the attachment of threonine to tRNA(Thr) in a two-step reaction: L-threonine is first activated by ATP to form Thr-AMP and then transferred to the acceptor end of tRNA(Thr). Also edits incorrectly charged L-seryl-tRNA(Thr). The sequence is that of Threonine--tRNA ligase from Verminephrobacter eiseniae (strain EF01-2).